Here is a 36-residue protein sequence, read N- to C-terminus: Dermonecrotic toxin LgSicTox-beta-LOXN1/LOXN7 (36 aa).

The protein belongs to the arthropod phospholipase D family. Class II subfamily. It depends on Mg(2+) as a cofactor. Contains 2 disulfide bonds. As to expression, expressed by the venom gland.

The protein resides in the secreted. It carries out the reaction an N-(acyl)-sphingosylphosphocholine = an N-(acyl)-sphingosyl-1,3-cyclic phosphate + choline. The enzyme catalyses an N-(acyl)-sphingosylphosphoethanolamine = an N-(acyl)-sphingosyl-1,3-cyclic phosphate + ethanolamine. The catalysed reaction is a 1-acyl-sn-glycero-3-phosphocholine = a 1-acyl-sn-glycero-2,3-cyclic phosphate + choline. It catalyses the reaction a 1-acyl-sn-glycero-3-phosphoethanolamine = a 1-acyl-sn-glycero-2,3-cyclic phosphate + ethanolamine. Dermonecrotic toxins cleave the phosphodiester linkage between the phosphate and headgroup of certain phospholipids (sphingolipid and lysolipid substrates), forming an alcohol (often choline) and a cyclic phosphate. This toxin acts on sphingomyelin (SM). It may also act on ceramide phosphoethanolamine (CPE), lysophosphatidylcholine (LPC) and lysophosphatidylethanolamine (LPE), but not on lysophosphatidylserine (LPS), and lysophosphatidylglycerol (LPG). It acts by transphosphatidylation, releasing exclusively cyclic phosphate products as second products. Induces dermonecrosis, hemolysis, increased vascular permeability, edema, inflammatory response, and platelet aggregation. This is Dermonecrotic toxin LgSicTox-beta-LOXN1/LOXN7 from Loxosceles gaucho (Spider).